The following is a 109-amino-acid chain: Large ribosomal subunit protein uL24 (109 aa).

Residues 1–24 form a disordered region; that stretch reads MANVTTDIKRNDTVAVTSGKDKGK.

This sequence belongs to the universal ribosomal protein uL24 family. In terms of assembly, part of the 50S ribosomal subunit.

Its function is as follows. One of two assembly initiator proteins, it binds directly to the 5'-end of the 23S rRNA, where it nucleates assembly of the 50S subunit. Functionally, one of the proteins that surrounds the polypeptide exit tunnel on the outside of the subunit. This Koribacter versatilis (strain Ellin345) protein is Large ribosomal subunit protein uL24.